The sequence spans 349 residues: Beta-hexosaminidase (349 aa).

Residues aspartate 64, arginine 72, arginine 138, and 168-169 (KH) contribute to the substrate site. Histidine 181 acts as the Proton donor/acceptor in catalysis. Catalysis depends on aspartate 252, which acts as the Nucleophile.

The protein belongs to the glycosyl hydrolase 3 family. NagZ subfamily.

It is found in the cytoplasm. It carries out the reaction Hydrolysis of terminal non-reducing N-acetyl-D-hexosamine residues in N-acetyl-beta-D-hexosaminides.. The protein operates within cell wall biogenesis; peptidoglycan recycling. Plays a role in peptidoglycan recycling by cleaving the terminal beta-1,4-linked N-acetylglucosamine (GlcNAc) from peptide-linked peptidoglycan fragments, giving rise to free GlcNAc, anhydro-N-acetylmuramic acid and anhydro-N-acetylmuramic acid-linked peptides. The protein is Beta-hexosaminidase of Nitrosospira multiformis (strain ATCC 25196 / NCIMB 11849 / C 71).